The chain runs to 362 residues: Putative G-protein coupled receptor B0244.5 (362 aa).

Residues 1–47 (MQNIFENCSYHSKYEPYFLNCTNTTNQCVLIQDVGIIQAIDFWANLC) lie on the Extracellular side of the membrane. N-linked (GlcNAc...) asparagine glycosylation is found at N7, N20, and N23. A helical transmembrane segment spans residues 48-68 (IPFTLFVIAFILNGYYLSILI). The Cytoplasmic segment spans residues 69-81 (PEFRKMNDTTKKQ). Residues 82–102 (YIFVVSRGISSLSASSIMMVL) form a helical membrane-spanning segment. The Extracellular segment spans residues 103 to 125 (RLLKMLSTSFTVYFLFFLIDDLS). The chain crosses the membrane as a helical span at residues 126–145 (FYSLLGSYVGSTLLLYLATV). Residues 146-161 (RPIFYSIQISVRIVYK) lie on the Cytoplasmic side of the membrane. A helical membrane pass occupies residues 162–182 (FALVNVLLAVVLAVTTAIFQA). Topologically, residues 183–204 (AEVSDGFFHCDVQHCQPIINIA) are extracellular. Residues 205 to 225 (MFVIIATSFLIPIITLTFVLV) traverse the membrane as a helical segment. Residues 226–255 (TLCFQKSRTQSIGNFTVDNSVYKSARTRLA) lie on the Cytoplasmic side of the membrane. A helical transmembrane segment spans residues 256–276 (WTLFTFTLISLTEMIPSSFLV). At 277–295 (NLRVEDTITICVNFYQADH) the chain is on the extracellular side. A helical transmembrane segment spans residues 296 to 316 (LFIPAIMNSFQTLAWGIALIV). The Cytoplasmic portion of the chain corresponds to 317–362 (DPLCALLFDPRIRKVWVEHVSRLSIIIGRSFEACCHSNLNKEIQDK).

The protein belongs to the G-protein coupled receptor 1 family. B0244 subfamily.

The protein resides in the cell membrane. This is Putative G-protein coupled receptor B0244.5 from Caenorhabditis elegans.